We begin with the raw amino-acid sequence, 581 residues long: Frizzled-10 (581 aa).

Positions 1-20 are cleaved as a signal peptide; that stretch reads MQRPGPRLWLVLQVMGSCAA. Over 21–225 the chain is Extracellular; the sequence is ISSMDMERPG…DVYWSREDKR (205 aa). In terms of domain architecture, FZ spans 29 to 150; sequence PGDGKCQPIE…NDPNYLCMEA (122 aa). Cystine bridges form between Cys34/Cys95, Cys42/Cys88, Cys79/Cys117, Cys106/Cys147, and Cys110/Cys134. The N-linked (GlcNAc...) asparagine glycan is linked to Asn48. N-linked (GlcNAc...) asparagine glycosylation is present at Asn153. Residues 226 to 246 form a helical membrane-spanning segment; sequence FAVVWLAIWAVLCFFSSAFTV. At 247–262 the chain is on the cytoplasmic side; it reads LTFLIDPARFRYPERP. Residues 263-283 traverse the membrane as a helical segment; that stretch reads IIFLSMCYCVYSVGYLIRLFA. The Extracellular segment spans residues 284 to 311; the sequence is GAESIACDRDSGQLYVIQEGLESTGCTL. Residues 312–332 traverse the membrane as a helical segment; that stretch reads VFLVLYYFGMASSLWWVVLTL. Over 333–351 the chain is Cytoplasmic; that stretch reads TWFLAAGKKWGHEAIEANS. A helical membrane pass occupies residues 352–372; sequence SYFHLAAWAIPAVKTILILVM. Residues 373 to 393 lie on the Extracellular side of the membrane; sequence RRVAGDELTGVCYVGSMDVNA. Residues 394-414 form a helical membrane-spanning segment; that stretch reads LTGFVLIPLACYLVIGTSFIL. Residues 415–443 lie on the Cytoplasmic side of the membrane; sequence SGFVALFHIRRVMKTGGENTDKLEKLMVR. The helical transmembrane segment at 444-464 threads the bilayer; that stretch reads IGLFSVLYTVPATCVIACYFY. Residues 465–502 lie on the Extracellular side of the membrane; it reads ERLNMDYWKILAAQHKCKMNNQTKTLDCLMAASIPAVE. Asn485 carries N-linked (GlcNAc...) asparagine glycosylation. A helical transmembrane segment spans residues 503 to 523; the sequence is IFMVKIFMLLVVGITSGMWIW. Over 524-581 the chain is Cytoplasmic; sequence TSKTLQSWQQVCSRRLKKKSRRKPASVITSGGIYKKAQHPQKTHHGKYEIPAQSPTCV. The Lys-Thr-X-X-X-Trp motif, mediates interaction with the PDZ domain of Dvl family members signature appears at 526 to 531; the sequence is KTLQSW. The segment at 560–581 is disordered; that stretch reads AQHPQKTHHGKYEIPAQSPTCV. Positions 579–581 match the PDZ-binding motif; the sequence is TCV.

Belongs to the G-protein coupled receptor Fz/Smo family. In terms of assembly, interacts with WNT7B. Interacts with MYOC. Post-translationally, ubiquitinated by ZNRF3, leading to its degradation by the proteasome. Highest levels in the placenta and fetal kidney, followed by fetal lung and brain. In adult brain, abundantly expressed in the cerebellum, followed by cerebral cortex, medulla and spinal cord; very low levels in total brain, frontal lobe, temporal lobe and putamen. Weak expression detected in adult brain, heart, lung, skeletal muscle, pancreas, spleen and prostate.

The protein localises to the cell membrane. Functionally, receptor for Wnt proteins. Functions in the canonical Wnt/beta-catenin signaling pathway. The canonical Wnt/beta-catenin signaling pathway leads to the activation of disheveled proteins, inhibition of GSK-3 kinase, nuclear accumulation of beta-catenin and activation of Wnt target genes. A second signaling pathway involving PKC and calcium fluxes has been seen for some family members, but it is not yet clear if it represents a distinct pathway or if it can be integrated in the canonical pathway, as PKC seems to be required for Wnt-mediated inactivation of GSK-3 kinase. Both pathways seem to involve interactions with G-proteins. May be involved in transduction and intercellular transmission of polarity information during tissue morphogenesis and/or in differentiated tissues. This Homo sapiens (Human) protein is Frizzled-10 (FZD10).